A 260-amino-acid chain; its full sequence is MGQKIHPVGFRLGITQEHQSRWFAEPSRYPELLQEDHKLRQYIEQKLGRLAQNNAGISEVRIERKADQIDLEVRTARPGVVVGRGGQGIEALRTGLQTLLGGNRQIRINVVEVQRVDADAYLIAEFIAQQLERRVSFRRVVRQAIQRAQKAGIQGIKVQVSGRLNGAEIARTEWTREGRVPLHTLRADIDYSYCTAKTVYGILGIKVWVFKGEIIPGQEVATPPPSPRDRDRDRGDRDREPRRRQQQRRRQQFEDRSNEG.

A KH type-2 domain is found at 39–114 (LRQYIEQKLG…QIRINVVEVQ (76 aa)). The tract at residues 218-260 (QEVATPPPSPRDRDRDRGDRDREPRRRQQQRRRQQFEDRSNEG) is disordered. 2 stretches are compositionally biased toward basic and acidic residues: residues 227–243 (PRDRDRDRGDRDREPRR) and 251–260 (QQFEDRSNEG).

It belongs to the universal ribosomal protein uS3 family. Part of the 30S ribosomal subunit. Forms a tight complex with proteins S10 and S14.

Binds the lower part of the 30S subunit head. Binds mRNA in the 70S ribosome, positioning it for translation. The chain is Small ribosomal subunit protein uS3 from Nostoc sp. (strain PCC 7120 / SAG 25.82 / UTEX 2576).